A 567-amino-acid chain; its full sequence is Geranylgeranyl transferase type-2 subunit alpha (567 aa).

6 PFTA repeats span residues 44-78 (LDES…QLET), 88-122 (LVKA…RLPE), 124-158 (NWAR…QAAV), 159-193 (APAE…QLHP), 207-241 (VLLR…RAEP), and 363-397 (VLQS…ALDP). A Phosphoserine modification is found at serine 98. 5 LRR repeats span residues 442–463 (DVRV…EQLL), 464–486 (LVTH…AALR), 487–508 (CLEV…ANLP), 509–530 (RLRE…QTLA), and 534–555 (RLVF…RERL).

It belongs to the protein prenyltransferase subunit alpha family. In terms of assembly, heterotrimer composed of RABGGTA, RABGGTB and CHM; within this trimer, RABGGTA and RABGGTB form the catalytic component B, while CHM (component A) mediates peptide substrate binding. The Rab GGTase dimer (RGGT) interacts with CHM (component A) prior to Rab protein binding; the association is stabilized by geranylgeranyl pyrophosphate (GGpp). The CHM:RGGT:Rab complex is destabilized by GGpp. Interacts with non-phosphorylated form of RAB8A; phosphorylation of RAB8A at 'Thr-72' disrupts this interaction.

The catalysed reaction is geranylgeranyl diphosphate + L-cysteinyl-[protein] = S-geranylgeranyl-L-cysteinyl-[protein] + diphosphate. Its activity is regulated as follows. The enzymatic reaction requires the aid of a Rab escort protein (also called component A), such as CHM. Its function is as follows. Catalyzes the transfer of a geranylgeranyl moiety from geranylgeranyl diphosphate to both cysteines of Rab proteins with the C-terminal sequence -XXCC, -XCXC and -CCXX, such as RAB1A, RAB3A, RAB5A and RAB7A. This is Geranylgeranyl transferase type-2 subunit alpha (Rabggta) from Mus musculus (Mouse).